The sequence spans 304 residues: Quinolinate synthase 1 (304 aa).

Iminosuccinate contacts are provided by His-24 and Ser-41. Cys-86 is a [4Fe-4S] cluster binding site. Iminosuccinate-binding positions include 112-114 and Ser-129; that span reads YVN. Cys-171 serves as a coordination point for [4Fe-4S] cluster. Residues 197 to 199 and Thr-214 contribute to the iminosuccinate site; that span reads HPE. Position 259 (Cys-259) interacts with [4Fe-4S] cluster.

This sequence belongs to the quinolinate synthase family. Type 2 subfamily. The cofactor is [4Fe-4S] cluster.

It localises to the cytoplasm. The enzyme catalyses iminosuccinate + dihydroxyacetone phosphate = quinolinate + phosphate + 2 H2O + H(+). It participates in cofactor biosynthesis; NAD(+) biosynthesis; quinolinate from iminoaspartate: step 1/1. Catalyzes the condensation of iminoaspartate with dihydroxyacetone phosphate to form quinolinate. This is Quinolinate synthase 1 from Methanosarcina acetivorans (strain ATCC 35395 / DSM 2834 / JCM 12185 / C2A).